Reading from the N-terminus, the 70-residue chain is DNA-directed RNA polymerase subunit omega (70 aa).

This sequence belongs to the RNA polymerase subunit omega family. In terms of assembly, the RNAP catalytic core consists of 2 alpha, 1 beta, 1 beta' and 1 omega subunit. When a sigma factor is associated with the core the holoenzyme is formed, which can initiate transcription.

The enzyme catalyses RNA(n) + a ribonucleoside 5'-triphosphate = RNA(n+1) + diphosphate. Promotes RNA polymerase assembly. Latches the N- and C-terminal regions of the beta' subunit thereby facilitating its interaction with the beta and alpha subunits. The polypeptide is DNA-directed RNA polymerase subunit omega (Staphylococcus saprophyticus subsp. saprophyticus (strain ATCC 15305 / DSM 20229 / NCIMB 8711 / NCTC 7292 / S-41)).